A 269-amino-acid chain; its full sequence is Aegyptin-like protein (269 aa).

An N-terminal signal peptide occupies residues 1 to 19 (MKLLLLLASVLCLALIVSA). The segment at 19-152 (ARPSDETTDQ…GGAEGGEESP (134 aa)) is disordered. Residues 38–148 (TSDSYHQEED…AGEEGGAEGG (111 aa)) are GE-rich region which mediates binding of Ca(2+). 3 stretches are compositionally biased toward acidic residues: residues 56 to 73 (GTED…ESSS), 98 to 121 (GEED…EGGA), and 131 to 149 (GGAD…EGGE). Residues 148–269 (GEESPVNTYH…DCIVEKRDSE (122 aa)) are mediates binding of host collagen and inhibition of platelet aggregation. Disulfide bonds link Cys208-Cys261 and Cys230-Cys239.

The protein belongs to the aegyptin family. In terms of tissue distribution, female saliva (at protein level). Distal lateral lobes of female salivary gland (at protein level). Low-level expression in male salivary gland. Not detected in female and male carcasses.

Its subcellular location is the secreted. In terms of biological role, modulates blood feeding of female mosquitoes on vertebrate hosts. Inhibits collagen-induced platelet aggregation in the host via preventing collagen interaction with its ligands: glycoprotein VI and integrin alpha-2/beta-1 (ITGA2/ITGB1). Inhibits collagen-induced increase of Ca(2+) levels in host platelets. Binds to host collagens. Binds Ca(2+). Prevents a decrease in platelet count in the host blood after collagen injection. Functionally, (Microbial infection) Does not affect the development of Plasmodium berghei parasites in mosquitoes. This chain is Aegyptin-like protein, found in Anopheles stephensi (Indo-Pakistan malaria mosquito).